The chain runs to 323 residues: Fructose-1,6-bisphosphatase class 1 (323 aa).

Residues Glu-93, Asp-114, Leu-116, and Asp-117 each coordinate Mg(2+). Residues 117–120, Asn-205, Tyr-233, and Lys-263 contribute to the substrate site; that span reads DGSS. Mg(2+) is bound at residue Glu-269.

Belongs to the FBPase class 1 family. In terms of assembly, homotetramer. Mg(2+) serves as cofactor.

The protein resides in the cytoplasm. It catalyses the reaction beta-D-fructose 1,6-bisphosphate + H2O = beta-D-fructose 6-phosphate + phosphate. It participates in carbohydrate biosynthesis; gluconeogenesis. This Sulfurihydrogenibium sp. (strain YO3AOP1) protein is Fructose-1,6-bisphosphatase class 1.